A 93-amino-acid chain; its full sequence is Aspartyl/glutamyl-tRNA(Asn/Gln) amidotransferase subunit C (93 aa).

Belongs to the GatC family. As to quaternary structure, heterotrimer of A, B and C subunits.

It catalyses the reaction L-glutamyl-tRNA(Gln) + L-glutamine + ATP + H2O = L-glutaminyl-tRNA(Gln) + L-glutamate + ADP + phosphate + H(+). The catalysed reaction is L-aspartyl-tRNA(Asn) + L-glutamine + ATP + H2O = L-asparaginyl-tRNA(Asn) + L-glutamate + ADP + phosphate + 2 H(+). Functionally, allows the formation of correctly charged Asn-tRNA(Asn) or Gln-tRNA(Gln) through the transamidation of misacylated Asp-tRNA(Asn) or Glu-tRNA(Gln) in organisms which lack either or both of asparaginyl-tRNA or glutaminyl-tRNA synthetases. The reaction takes place in the presence of glutamine and ATP through an activated phospho-Asp-tRNA(Asn) or phospho-Glu-tRNA(Gln). The polypeptide is Aspartyl/glutamyl-tRNA(Asn/Gln) amidotransferase subunit C (Methanothrix thermoacetophila (strain DSM 6194 / JCM 14653 / NBRC 101360 / PT) (Methanosaeta thermophila)).